The primary structure comprises 820 residues: Ribosome biogenesis protein ERB1 (820 aa).

The tract at residues 1 to 111 (MVRSRSNSVK…SDAGDDEVDP (111 aa)) is disordered. Residues 9-19 (VKKDLKRKVDE) show a composition bias toward basic and acidic residues. The segment covering 20-48 (PVDVQDEFDVEGLIDEGDSDDEDEAEQEV) has biased composition (acidic residues). A compositionally biased stretch (basic and acidic residues) spans 53-64 (VTKDKKNTSKTE). The segment covering 65 to 110 (NEEDADDESDSDAELEALIGEEEDLSGSELEDELAYFSDAGDDEVD) has biased composition (acidic residues). Residues 282–395 (RFIPSKHEAK…LRHVPGYSES (114 aa)) form a required for interaction with NOP7 region. The tract at residues 395-431 (SVRERFERSLDLYLAPRVRKNKLNIDPDSLIPDLPSP) is required for interaction with YTM1. WD repeat units lie at residues 447–486 (GHKG…ELYR) and 495–535 (AQDD…FDIE). The disordered stretch occupies residues 545–585 (GWGFAEGGREQQDIDTKGLDDDADSDSDDETGHVKKKSPPA). Over residues 551–564 (GGREQQDIDTKGLD) the composition is skewed to basic and acidic residues. WD repeat units follow at residues 604-646 (TATK…SQSP), 649-687 (KSKG…MAKK), 690-729 (PGAR…KPYK), 733-773 (YHEK…DMMT), and 789-820 (KSGL…LWTT).

It belongs to the WD repeat BOP1/ERB1 family. As to quaternary structure, component of the NOP7 complex, composed of ERB1, NOP7 and YTM1. The complex is held together by ERB1, which interacts with NOP7 via its N-terminal domain and with YTM1 via a high-affinity interaction between the seven-bladed beta-propeller domains of the 2 proteins. The NOP7 complex associates with the 66S pre-ribosome.

The protein localises to the nucleus. The protein resides in the nucleolus. It is found in the nucleoplasm. In terms of biological role, component of the NOP7 complex, which is required for maturation of the 25S and 5.8S ribosomal RNAs and formation of the 60S ribosome. The polypeptide is Ribosome biogenesis protein ERB1 (Yarrowia lipolytica (strain CLIB 122 / E 150) (Yeast)).